Reading from the N-terminus, the 221-residue chain is Probable nicotinate-nucleotide adenylyltransferase (221 aa).

It belongs to the NadD family.

It carries out the reaction nicotinate beta-D-ribonucleotide + ATP + H(+) = deamido-NAD(+) + diphosphate. It functions in the pathway cofactor biosynthesis; NAD(+) biosynthesis; deamido-NAD(+) from nicotinate D-ribonucleotide: step 1/1. Functionally, catalyzes the reversible adenylation of nicotinate mononucleotide (NaMN) to nicotinic acid adenine dinucleotide (NaAD). This chain is Probable nicotinate-nucleotide adenylyltransferase, found in Marinomonas sp. (strain MWYL1).